A 275-amino-acid polypeptide reads, in one-letter code: Putative rhamnulose-1-phosphate aldolase (275 aa).

Glu117 is a catalytic residue. Zn(2+) contacts are provided by His141, His143, and His212.

The protein belongs to the aldolase class II family. RhaD subfamily. As to quaternary structure, homotetramer. It depends on Zn(2+) as a cofactor.

It is found in the cytoplasm. The catalysed reaction is L-rhamnulose 1-phosphate = (S)-lactaldehyde + dihydroxyacetone phosphate. Its pathway is carbohydrate degradation; L-rhamnose degradation; glycerone phosphate from L-rhamnose: step 3/3. In terms of biological role, catalyzes the reversible cleavage of L-rhamnulose-1-phosphate to dihydroxyacetone phosphate (DHAP) and L-lactaldehyde. The protein is Putative rhamnulose-1-phosphate aldolase of Salmonella typhi.